Here is a 335-residue protein sequence, read N- to C-terminus: Eukaryotic translation initiation factor 3 subunit I (335 aa).

5 WD repeats span residues 8 to 47 (GHERALTQIRYNKDGDIIFSTAKDQHICAWYAHNGERLGT), 50 to 91 (GHQG…KTWD), 145 to 184 (CAESKATVAGWSYMSKYIIAGHEDGSVSQYDSKTGELLFN), 189 to 228 (EPDLQVTDLQWSPDRTYFITASKDKTAKLVNARDLEVMKT), and 286 to 325 (GHFGPLNTVAVDPNGKGYASGGEDGYVRVHQFDKGYFDFT).

This sequence belongs to the eIF-3 subunit I family. As to quaternary structure, component of the eukaryotic translation initiation factor 3 (eIF-3) complex.

The protein localises to the cytoplasm. Its function is as follows. Component of the eukaryotic translation initiation factor 3 (eIF-3) complex, which is involved in protein synthesis of a specialized repertoire of mRNAs and, together with other initiation factors, stimulates binding of mRNA and methionyl-tRNAi to the 40S ribosome. The eIF-3 complex specifically targets and initiates translation of a subset of mRNAs involved in cell proliferation. This chain is Eukaryotic translation initiation factor 3 subunit I (tif34), found in Sclerotinia sclerotiorum (strain ATCC 18683 / 1980 / Ss-1) (White mold).